The sequence spans 397 residues: Elongation factor Tu (397 aa).

The tr-type G domain maps to 10–207; it reads KPHCNIGTIG…EVDKYIPQPE (198 aa). The G1 stretch occupies residues 19-26; that stretch reads GHVDHGKT. Position 19–26 (19–26) interacts with GTP; that stretch reads GHVDHGKT. Thr26 serves as a coordination point for Mg(2+). Residues 61-65 form a G2 region; it reads GITIS. A G3 region spans residues 82-85; the sequence is DCPG. GTP is bound by residues 82–86 and 137–140; these read DCPGH and NKCD. The G4 stretch occupies residues 137–140; that stretch reads NKCD. Positions 175–177 are G5; the sequence is SAL.

Belongs to the TRAFAC class translation factor GTPase superfamily. Classic translation factor GTPase family. EF-Tu/EF-1A subfamily. In terms of assembly, monomer.

The protein resides in the cytoplasm. The enzyme catalyses GTP + H2O = GDP + phosphate + H(+). GTP hydrolase that promotes the GTP-dependent binding of aminoacyl-tRNA to the A-site of ribosomes during protein biosynthesis. This Azorhizobium caulinodans (strain ATCC 43989 / DSM 5975 / JCM 20966 / LMG 6465 / NBRC 14845 / NCIMB 13405 / ORS 571) protein is Elongation factor Tu.